The primary structure comprises 294 residues: Cytidine deaminase (294 aa).

CMP/dCMP-type deaminase domains follow at residues 48 to 168 and 186 to 294; these read DEDA…FGPK and LTGD…VLLA. 89–91 contributes to the substrate binding site; the sequence is NME. Histidine 102 is a binding site for Zn(2+). Catalysis depends on glutamate 104, which acts as the Proton donor. Zn(2+) contacts are provided by cysteine 129 and cysteine 132.

Belongs to the cytidine and deoxycytidylate deaminase family. In terms of assembly, homodimer. Zn(2+) is required as a cofactor.

It catalyses the reaction cytidine + H2O + H(+) = uridine + NH4(+). The enzyme catalyses 2'-deoxycytidine + H2O + H(+) = 2'-deoxyuridine + NH4(+). This enzyme scavenges exogenous and endogenous cytidine and 2'-deoxycytidine for UMP synthesis. The protein is Cytidine deaminase of Escherichia coli O139:H28 (strain E24377A / ETEC).